We begin with the raw amino-acid sequence, 145 residues long: D-aminoacyl-tRNA deacylase (145 aa).

Residues 137–138 (GP) carry the Gly-cisPro motif, important for rejection of L-amino acids motif.

The protein belongs to the DTD family. As to quaternary structure, homodimer.

It is found in the cytoplasm. The catalysed reaction is glycyl-tRNA(Ala) + H2O = tRNA(Ala) + glycine + H(+). It carries out the reaction a D-aminoacyl-tRNA + H2O = a tRNA + a D-alpha-amino acid + H(+). An aminoacyl-tRNA editing enzyme that deacylates mischarged D-aminoacyl-tRNAs. Also deacylates mischarged glycyl-tRNA(Ala), protecting cells against glycine mischarging by AlaRS. Acts via tRNA-based rather than protein-based catalysis; rejects L-amino acids rather than detecting D-amino acids in the active site. By recycling D-aminoacyl-tRNA to D-amino acids and free tRNA molecules, this enzyme counteracts the toxicity associated with the formation of D-aminoacyl-tRNA entities in vivo and helps enforce protein L-homochirality. In Rhodopirellula baltica (strain DSM 10527 / NCIMB 13988 / SH1), this protein is D-aminoacyl-tRNA deacylase.